The sequence spans 45 residues: Monellin chain A (45 aa).

Heterodimer of an A chain and a B chain.

In terms of biological role, taste-modifying protein; intensely sweet-tasting protein. The polypeptide is Monellin chain A (Dioscoreophyllum cumminsii (Serendipity berry)).